Consider the following 145-residue polypeptide: MDIHQILKLLPHRYPILLVDRVLEIETGKRIKALKNVTINEPFFMGHFPKHPVMPGVLMIEAMAQAAALLSFSTLGVTPDDKTVYYFAGIDGARFKRPVGPGDQLIMDVELLRMKAGIFKFKGVCRVDENLACEAELMCTMRTVA.

His47 is a catalytic residue.

The protein belongs to the thioester dehydratase family. FabZ subfamily.

It is found in the cytoplasm. It carries out the reaction a (3R)-hydroxyacyl-[ACP] = a (2E)-enoyl-[ACP] + H2O. In terms of biological role, involved in unsaturated fatty acids biosynthesis. Catalyzes the dehydration of short chain beta-hydroxyacyl-ACPs and long chain saturated and unsaturated beta-hydroxyacyl-ACPs. The chain is 3-hydroxyacyl-[acyl-carrier-protein] dehydratase FabZ from Polaromonas naphthalenivorans (strain CJ2).